An 85-amino-acid chain; its full sequence is Coiled-coil-helix-coiled-coil-helix domain-containing protein 7 (85 aa).

The 43-residue stretch at 13-55 folds into the CHCH domain; it reads SNPCLEETDASTKCMDDNRYEKDLCTPYFVKYKNCRKFWNGIM. 2 consecutive short sequence motifs (cx9C motif) follow at residues 16–26 and 37–47; these read CLEETDASTKC and CTPYFVKYKNC. 2 disulfides stabilise this stretch: Cys-16–Cys-47 and Cys-26–Cys-37.

This sequence belongs to the CHCHD7 family.

It localises to the mitochondrion intermembrane space. This chain is Coiled-coil-helix-coiled-coil-helix domain-containing protein 7 (chchd7), found in Xenopus tropicalis (Western clawed frog).